The primary structure comprises 156 residues: Small ribosomal subunit protein uS7 (156 aa).

This sequence belongs to the universal ribosomal protein uS7 family. In terms of assembly, part of the 30S ribosomal subunit. Contacts proteins S9 and S11.

In terms of biological role, one of the primary rRNA binding proteins, it binds directly to 16S rRNA where it nucleates assembly of the head domain of the 30S subunit. Is located at the subunit interface close to the decoding center, probably blocks exit of the E-site tRNA. This Alkaliphilus oremlandii (strain OhILAs) (Clostridium oremlandii (strain OhILAs)) protein is Small ribosomal subunit protein uS7.